The sequence spans 298 residues: ADP/ATP translocase 2 (298 aa).

Met1 bears the N-acetylmethionine mark. At 1-7 (MTDAAVS) the chain is on the mitochondrial intermembrane side. Position 2 is an N-acetylthreonine; in ADP/ATP translocase 2, N-terminally processed (Thr2). One copy of the Solcar 1 repeat lies at 6–98 (VSFAKDFLAG…FAFKDKYKQI (93 aa)). At Ser7 the chain carries Phosphoserine. A helical membrane pass occupies residues 8–37 (FAKDFLAGGVAAAISKTAVAPIERVKLLLQ). The residue at position 23 (Lys23) is an N6-malonyllysine. The Mitochondrial matrix segment spans residues 38 to 74 (VQHASKQITADKQYKGIIDCVVRIPKEQGVLSFWRGN). Lys43 is modified (N6-succinyllysine). At Lys52 the chain carries N6,N6,N6-trimethyllysine; alternate. Position 52 is an N6,N6-dimethyllysine; alternate (Lys52). N6-methyllysine; alternate is present on Lys52. Residues 75–99 (LANVIRYFPTQALNFAFKDKYKQIF) form a helical membrane-spanning segment. ADP is bound by residues Arg80 and Lys92. 2 positions are modified to N6-malonyllysine: Lys92 and Lys96. Residues 100 to 109 (LGGVDKRTQF) are Mitochondrial intermembrane-facing. Lys105 is modified (N6-acetyllysine; alternate). Residue Lys105 is modified to N6-succinyllysine; alternate. The helical transmembrane segment at 110–130 (WRYFAGNLASGGAAGATSLCF) threads the bilayer. Solcar repeat units follow at residues 111–201 (RYFA…AKGM) and 212–297 (ISWM…IKKF). The Mitochondrial matrix segment spans residues 131-178 (VYPLDFARTRLAADVGKAGAEREFRGLGDCLVKIYKSDGIRGLYQGFN). Position 147 is an N6-methyllysine; alternate (Lys147). N6-acetyllysine; alternate is present on Lys147. An N6-succinyllysine; alternate modification is found at Lys147. N6-malonyllysine; alternate is present on Lys147. An N6-acetyllysine mark is found at Lys163 and Lys166. A helical transmembrane segment spans residues 179 to 199 (VSVQGIIIYRAAYFGIYDTAK). Residues 200–210 (GMLPDPKNTHI) are Mitochondrial intermembrane-facing. A helical transmembrane segment spans residues 211–231 (FISWMIAQSVTAVAGLTSYPF). The Mitochondrial matrix portion of the chain corresponds to 232-273 (DTVRRRMMMQSGRKGTDIMYTGTLDCWRKIARDEGAKAFFKG). ADP is bound at residue Arg235. The important for transport activity stretch occupies residues 235–240 (RRRMMM). The short motif at 235 to 240 (RRRMMM) is the Nucleotide carrier signature motif element. The residue at position 268 (Lys268) is an N6-acetyllysine; alternate. Lys268 bears the N6-succinyllysine; alternate mark. The chain crosses the membrane as a helical span at residues 274–291 (AWSNVLRGMGGAFVLVLY). Residues 292-298 (DEIKKFT) lie on the Mitochondrial intermembrane side of the membrane.

Belongs to the mitochondrial carrier (TC 2.A.29) family. In terms of assembly, monomer. Component of the MMXD complex, which includes CIAO1, ERCC2, CIAO2B, MMS19 and SLC25A5/ANT2. Interacts with AK4. Interacts with TIMM44; leading to inhibit the presequence translocase TIMM23, thereby promoting stabilization of PINK1. Trimethylated by ANTKMT at Lys-52.

Its subcellular location is the mitochondrion inner membrane. The protein localises to the membrane. It carries out the reaction ADP(in) + ATP(out) = ADP(out) + ATP(in). The enzyme catalyses H(+)(in) = H(+)(out). The matrix-open state (m-state) is inhibited by the membrane-permeable bongkrekic acid (BKA). The cytoplasmic-open state (c-state) is inhibited by the membrane-impermeable toxic inhibitor carboxyatractyloside (CATR). Proton transporter activity is inhibited by ADP:ATP antiporter activity. ADP:ATP antiporter that mediates import of ADP into the mitochondrial matrix for ATP synthesis, and export of ATP out to fuel the cell. Cycles between the cytoplasmic-open state (c-state) and the matrix-open state (m-state): operates by the alternating access mechanism with a single substrate-binding site intermittently exposed to either the cytosolic (c-state) or matrix (m-state) side of the inner mitochondrial membrane. In addition to its ADP:ATP antiporter activity, also involved in mitochondrial uncoupling and mitochondrial permeability transition pore (mPTP) activity. Plays a role in mitochondrial uncoupling by acting as a proton transporter: proton transport uncouples the proton flows via the electron transport chain and ATP synthase to reduce the efficiency of ATP production and cause mitochondrial thermogenesis. Proton transporter activity is inhibited by ADP:ATP antiporter activity, suggesting that SLC25A5/ANT2 acts as a master regulator of mitochondrial energy output by maintaining a delicate balance between ATP production (ADP:ATP antiporter activity) and thermogenesis (proton transporter activity). Proton transporter activity requires free fatty acids as cofactor, but does not transport it. Probably mediates mitochondrial uncoupling in tissues that do not express UCP1. Also plays a key role in mPTP opening, a non-specific pore that enables free passage of the mitochondrial membranes to solutes of up to 1.5 kDa, and which contributes to cell death. It is however unclear if SLC25A5/ANT2 constitutes a pore-forming component of mPTP or regulates it. Acts as a regulator of mitophagy independently of ADP:ATP antiporter activity: promotes mitophagy via interaction with TIMM44, leading to inhibit the presequence translocase TIMM23, thereby promoting stabilization of PINK1. As part of the mitotic spindle-associated MMXD complex it may play a role in chromosome segregation. This is ADP/ATP translocase 2 from Bos taurus (Bovine).